The following is a 221-amino-acid chain: N-acetyltransferase 8F1 (221 aa).

A helical membrane pass occupies residues 53–73; it reads LVLVSGSWLLAVVCIFFLLLL. Residues 69–219 enclose the N-acetyltransferase domain; it reads FLLLLLRFLA…RTIQLKYPFP (151 aa).

The protein belongs to the camello family.

The protein resides in the membrane. In terms of biological role, may play a role in regulation of gastrulation. This Rattus norvegicus (Rat) protein is N-acetyltransferase 8F1.